A 678-amino-acid chain; its full sequence is Serine/threonine-protein kinase mph1 (678 aa).

Disordered regions lie at residues 39–93 and 114–209; these read KNDT…NSAL and LPST…SNSV. Polar residues-rich tracts occupy residues 41 to 66 and 114 to 125; these read DTFSSKSSHSDGTVTGDTLRRQSSGA and LPSTNASHSEVS. In terms of domain architecture, Protein kinase spans 316–607; it reads FIKLGVVGKG…LVHPFLNPLP (292 aa). Residues 322 to 330 and lysine 345 each bind ATP; that span reads VGKGGSSMV. Aspartate 442 serves as the catalytic Proton acceptor.

It belongs to the protein kinase superfamily. Ser/Thr protein kinase family.

The enzyme catalyses L-seryl-[protein] + ATP = O-phospho-L-seryl-[protein] + ADP + H(+). It catalyses the reaction L-threonyl-[protein] + ATP = O-phospho-L-threonyl-[protein] + ADP + H(+). It carries out the reaction L-tyrosyl-[protein] + ATP = O-phospho-L-tyrosyl-[protein] + ADP + H(+). Its function is as follows. Involved in mitotic spindle assembly checkpoint signaling, a process that delays anaphase until chromosomes are bioriented on the spindle, and in the repair of incorrect mitotic kinetochore-spindle microtubule attachments. Phosphorylates spc7/knl1 on MELT motifs; phosphorylation is required for recruitment of the BUB1-BUB3 complex to kinetochores. This Schizosaccharomyces pombe (strain 972 / ATCC 24843) (Fission yeast) protein is Serine/threonine-protein kinase mph1.